The primary structure comprises 728 residues: 1,4-alpha-glucan branching enzyme GlgB (728 aa).

Aspartate 405 (nucleophile) is an active-site residue. The Proton donor role is filled by glutamate 458.

The protein belongs to the glycosyl hydrolase 13 family. GlgB subfamily. Monomer.

It carries out the reaction Transfers a segment of a (1-&gt;4)-alpha-D-glucan chain to a primary hydroxy group in a similar glucan chain.. It functions in the pathway glycan biosynthesis; glycogen biosynthesis. Functionally, catalyzes the formation of the alpha-1,6-glucosidic linkages in glycogen by scission of a 1,4-alpha-linked oligosaccharide from growing alpha-1,4-glucan chains and the subsequent attachment of the oligosaccharide to the alpha-1,6 position. The polypeptide is 1,4-alpha-glucan branching enzyme GlgB (Citrobacter koseri (strain ATCC BAA-895 / CDC 4225-83 / SGSC4696)).